We begin with the raw amino-acid sequence, 956 residues long: DNA replication helicase (956 aa).

An ATP-binding site is contributed by 120-127; the sequence is GTAGAGKT. The disordered stretch occupies residues 658–694; it reads PINNHVDADSSQGGQSVPVSQRMEHGQEETHDIPCLS. Positions 667–678 are enriched in low complexity; that stretch reads SSQGGQSVPVSQ. Over residues 679-694 the composition is skewed to basic and acidic residues; sequence RMEHGQEETHDIPCLS.

Belongs to the herpesviridae helicase family. In terms of assembly, associates with the primase and the primase-associated factor to form the helicase-primase complex.

It localises to the host nucleus. Functionally, component of the helicase/primase complex. Unwinds the DNA at the replication forks and generates single-stranded DNA for both leading and lagging strand synthesis. The primase synthesizes short RNA primers on the lagging strand that the polymerase elongates using dNTPs. Possesses helicase-like motifs and therefore may act as the helicase subunit of the complex. The protein is DNA replication helicase of Human cytomegalovirus (strain Merlin) (HHV-5).